A 2375-amino-acid polypeptide reads, in one-letter code: CCR4-NOT transcription complex subunit 1 (2375 aa).

3 short sequence motifs (LXXLL) span residues 153 to 157 (LPDLL), 181 to 185 (LHLLL), and 223 to 227 (LAPLL). Phosphoserine is present on S318. An LXXLL motif is present at residues 570–574 (LSMLL). Positions 725 to 770 (SAAPHTQSMQGFPPNLGSAFSTPQSPAKAFPPLSTPNQTTAFSGIG) are disordered. The tract at residues 799–1014 (NNDPFVQRKL…QGSITTPGSI (216 aa)) is interaction with ZFP36. S1060 is subject to Phosphoserine. The interaction with CNOT6, CNOT6L, CNOT7 and CNOT8 stretch occupies residues 1089-1604 (EPPENIQEKI…AQPMKQAWAT (516 aa)). Over residues 1314 to 1326 (QLSAPKKDVKQPE) the composition is skewed to basic and acidic residues. Residues 1314–1351 (QLSAPKKDVKQPEELPAITTTTTSTTPATSTTCTATVP) form a disordered region. A compositionally biased stretch (low complexity) spans 1332–1349 (TTTTTSTTPATSTTCTAT). 3 short sequence motifs (LXXLL) span residues 1638-1642 (LRSLL), 1941-1945 (LIALL), and 2095-2099 (LRVLL).

It belongs to the CNOT1 family. As to quaternary structure, component of the CCR4-NOT complex; distinct complexes seem to exist that differ in the participation of probably mutually exclusive catalytic subunits. In the complex, interacts directly with CNOT6, CNOT6L, CNOT7 or CNOT8. Interacts in a ligand-dependent fashion with ESR1 and RXRA. Interacts with NANOS2, TOB1 and ZFP36. Interacts with TNRC6A, TNRC6B or TNRC6C; the interactions are direct. Interacts with YTHDF2; the interaction is direct and promotes recruitment of the CCR4-NOT complex to N6-methyladenosine (m6A)-containing mRNAs, leading to their deadenylation and subsequent degradation. Interacts with EIF4ENIF1/4E-T. Interacts in an RNA-independent manner with BICC1 (via KH domains). Interacts with TEX13A; the interaction may inhibit CNOT1 binding to mRNA and subsequently CNOT1-mediated mRNA degradation.

The protein resides in the cytoplasm. It localises to the P-body. It is found in the nucleus. In terms of biological role, scaffolding component of the CCR4-NOT complex which is one of the major cellular mRNA deadenylases and is linked to various cellular processes including bulk mRNA degradation, miRNA-mediated repression, translational repression during translational initiation and general transcription regulation. Additional complex functions may be a consequence of its influence on mRNA expression. Its scaffolding function implies its interaction with the catalytic complex module and diverse RNA-binding proteins mediating the complex recruitment to selected mRNA 3'UTRs. Involved in degradation of AU-rich element (ARE)-containing mRNAs probably via association with ZFP36. Mediates the recruitment of the CCR4-NOT complex to miRNA targets and to the RISC complex via association with TNRC6A, TNRC6B or TNRC6C. Acts as a transcriptional repressor. Represses the ligand-dependent transcriptional activation by nuclear receptors. Involved in the maintenance of embryonic stem (ES) cell identity; prevents their differentiation towards extraembryonic trophectoderm lineages. Plays a role in rapid sperm motility via mediating timely mRNA turnover. This is CCR4-NOT transcription complex subunit 1 (Cnot1) from Mus musculus (Mouse).